A 1381-amino-acid chain; its full sequence is EH domain-containing and endocytosis protein 1 (1381 aa).

EH domains lie at 14 to 113 (EQAF…NPAP) and 135 to 227 (DIAK…IRLE). 2 EF-hand domains span residues 47-82 (LPGQLLSQVWATVDIDNKGFLNLNEFSAALRMIAQL) and 167-202 (LPNQTLGEIWALCDRDASGVLDKSEFIMAMYLIQLC). Positions 180, 182, 184, and 191 each coordinate Ca(2+). At Thr238 the chain carries Phosphothreonine. Phosphoserine occurs at positions 241 and 244. Position 245 is a phosphothreonine (Thr245). Phosphoserine occurs at positions 248 and 249. A Phosphothreonine modification is found at Thr251. A Phosphoserine modification is found at Ser265. One can recognise an EF-hand 3 domain in the interval 276-311 (EKKQQFDAIFDSLDKQHAGSLSSAVLVPFFLSSRLN). Residues 277–366 (KKQQFDAIFD…NELLQSPALG (90 aa)) enclose the EH 3 domain. The segment at 389–535 (SKPSLQDMPH…SSPVKRTAST (147 aa)) is disordered. Polar residues-rich tracts occupy residues 404–424 (AVNTQPTVPQVLPQNSNNGSL) and 432–447 (PSFSSPSPTKAQTVVQ). A Phosphoserine modification is found at Ser419. Residues 448–470 (NNTNNSFSYDNNNGQATLQQQQP) show a composition bias toward low complexity. Residues Thr450, Thr477, and Thr487 each carry the phosphothreonine modification. Residues 477–494 (THSSSGLKKFTPTSNFGQ) show a composition bias toward polar residues. A Phosphoserine modification is found at Ser495. A coiled-coil region spans residues 593 to 882 (GEASAQLSNA…RELSERQMNL (290 aa)). Residue Lys674 forms a Glycyl lysine isopeptide (Lys-Gly) (interchain with G-Cter in ubiquitin) linkage. Ser848 is modified (phosphoserine). The disordered stretch occupies residues 898-919 (SASNTDTTTKEATSRGNVHEDT). Residues 905-919 (TTKEATSRGNVHEDT) show a composition bias toward basic and acidic residues. A phosphoserine mark is found at Ser931, Ser950, Ser964, Ser1008, Ser1012, and Ser1020. 3 disordered regions span residues 933-1202 (LNVN…KDEF), 1214-1285 (VEED…QVSN), and 1298-1322 (SKAEPTKVATPSIPQQPIPLKNDPI). The span at 937 to 957 (RVKDDEEKTERTESDVFDRDV) shows a compositional bias: basic and acidic residues. 2 stretches are compositionally biased toward polar residues: residues 960–989 (LGSQSDSENANTNNGTQSGNETANPNLTET) and 1005–1019 (RSQSLTSSVANNAPQ). Positions 1021–1036 (VRDDVELPETLEERDT) are enriched in basic and acidic residues. Polar residues-rich tracts occupy residues 1037–1049 (INNTANRDNTGNL) and 1061–1073 (ATASTDVLSNETT). Thr1046 bears the Phosphothreonine mark. A phosphoserine mark is found at Ser1069, Ser1087, Ser1093, Ser1095, Ser1096, and Ser1100. A compositionally biased stretch (polar residues) spans 1093–1103 (SVSSIQESPKI). Residue Thr1111 is modified to Phosphothreonine. Positions 1127-1139 (SDSSSSDDDEFED) are enriched in acidic residues. Polar residues-rich tracts occupy residues 1147–1164 (TVKTLQTPYNAQPTSSLE) and 1178–1195 (TSPSHNEGNSKKASTNSI). 2 positions are modified to phosphoserine: Ser1181 and Ser1187. Positions 1214–1226 (VEEDNGADSESEF) are enriched in acidic residues. The able to bind biological membranes stretch occupies residues 1217-1381 (DNGADSESEF…AATNFLLDSA (165 aa)). Positions 1253–1285 (NAFTGTLTSSSNPTIPKPQVQQQSTSDPAQVSN) are enriched in polar residues. Thr1307 carries the post-translational modification Phosphothreonine. A Glycyl lysine isopeptide (Lys-Gly) (interchain with G-Cter in ubiquitin) cross-link involves residue Lys1329. The 43-residue stretch at 1338–1380 (ATTPKSLAVEELSGMGFTEEEAHNALEKCNWDLEAATNFLLDS) folds into the UBA domain. Ser1343 is subject to Phosphoserine.

Belongs to the VDP/USO1/EDE1 family. As to quaternary structure, interacts (via UBA domain) with monoubiquitin and ENT1 (via asparagine-proline-phenylalanine tripeptide motif called NPF). Interacts with PAL1 and SYP1.

The protein localises to the cytoplasm. Functions at the internalization step of the clathrin-mediated endocytosis (CME) as an early-acting scaffold protein. Requires clathrin adapter proteins, ENT1/2 and YAP1801/2, for normal spatiotemporal dynamics and viability. Binds to biological membranes in a ubiquitin-dependent manner. This chain is EH domain-containing and endocytosis protein 1 (EDE1), found in Saccharomyces cerevisiae (strain ATCC 204508 / S288c) (Baker's yeast).